We begin with the raw amino-acid sequence, 261 residues long: MVHQSHAYHMLKPSPWPLTGALSALLMTSGLAMWFHFHSTTLLLTGMLTNALTMYQWWRDVVRESTYQGHHTLPVQKGLRYGMILFITSEVFFFAGFFWAFYHSSLAPTPQLGGHWPPTGITPLNPLEVPLLNTAVLLASGVSITWAHHSLMENNRTQMIQALLITILLGIYFTLLQASEYIEAPFTISDGIYGSTFFMTTGFHGLHVIIGSTFLTVCLSCQLLFHFTSKHHFGFEAAAWYWHFVDVVWLFLYVSIYWWGS.

The Mitochondrial matrix segment spans residues 1 to 15; the sequence is MVHQSHAYHMLKPSP. Residues 16 to 34 form a helical membrane-spanning segment; sequence WPLTGALSALLMTSGLAMW. At 35 to 40 the chain is on the mitochondrial intermembrane side; sequence FHFHST. A helical transmembrane segment spans residues 41–66; it reads TLLLTGMLTNALTMYQWWRDVVREST. Residues 67–72 lie on the Mitochondrial matrix side of the membrane; it reads YQGHHT. Residues 73–105 form a helical membrane-spanning segment; the sequence is LPVQKGLRYGMILFITSEVFFFAGFFWAFYHSS. The Mitochondrial intermembrane portion of the chain corresponds to 106-128; the sequence is LAPTPQLGGHWPPTGITPLNPLE. A helical transmembrane segment spans residues 129 to 152; it reads VPLLNTAVLLASGVSITWAHHSLM. Residues 153–155 lie on the Mitochondrial matrix side of the membrane; sequence ENN. The helical transmembrane segment at 156-183 threads the bilayer; that stretch reads RTQMIQALLITILLGIYFTLLQASEYIE. Topologically, residues 184–190 are mitochondrial intermembrane; it reads APFTISD. A helical transmembrane segment spans residues 191 to 223; sequence GIYGSTFFMTTGFHGLHVIIGSTFLTVCLSCQL. At 224–232 the chain is on the mitochondrial matrix side; that stretch reads LFHFTSKHH. Residues 233-256 traverse the membrane as a helical segment; that stretch reads FGFEAAAWYWHFVDVVWLFLYVSI. The Mitochondrial intermembrane segment spans residues 257 to 261; sequence YWWGS.

The protein belongs to the cytochrome c oxidase subunit 3 family. Component of the cytochrome c oxidase (complex IV, CIV), a multisubunit enzyme composed of 14 subunits. The complex is composed of a catalytic core of 3 subunits MT-CO1, MT-CO2 and MT-CO3, encoded in the mitochondrial DNA, and 11 supernumerary subunits COX4I, COX5A, COX5B, COX6A, COX6B, COX6C, COX7A, COX7B, COX7C, COX8 and NDUFA4, which are encoded in the nuclear genome. The complex exists as a monomer or a dimer and forms supercomplexes (SCs) in the inner mitochondrial membrane with NADH-ubiquinone oxidoreductase (complex I, CI) and ubiquinol-cytochrome c oxidoreductase (cytochrome b-c1 complex, complex III, CIII), resulting in different assemblies (supercomplex SCI(1)III(2)IV(1) and megacomplex MCI(2)III(2)IV(2)).

It localises to the mitochondrion inner membrane. The catalysed reaction is 4 Fe(II)-[cytochrome c] + O2 + 8 H(+)(in) = 4 Fe(III)-[cytochrome c] + 2 H2O + 4 H(+)(out). Component of the cytochrome c oxidase, the last enzyme in the mitochondrial electron transport chain which drives oxidative phosphorylation. The respiratory chain contains 3 multisubunit complexes succinate dehydrogenase (complex II, CII), ubiquinol-cytochrome c oxidoreductase (cytochrome b-c1 complex, complex III, CIII) and cytochrome c oxidase (complex IV, CIV), that cooperate to transfer electrons derived from NADH and succinate to molecular oxygen, creating an electrochemical gradient over the inner membrane that drives transmembrane transport and the ATP synthase. Cytochrome c oxidase is the component of the respiratory chain that catalyzes the reduction of oxygen to water. Electrons originating from reduced cytochrome c in the intermembrane space (IMS) are transferred via the dinuclear copper A center (CU(A)) of subunit 2 and heme A of subunit 1 to the active site in subunit 1, a binuclear center (BNC) formed by heme A3 and copper B (CU(B)). The BNC reduces molecular oxygen to 2 water molecules using 4 electrons from cytochrome c in the IMS and 4 protons from the mitochondrial matrix. The polypeptide is Cytochrome c oxidase subunit 3 (MT-CO3) (Pongo pygmaeus (Bornean orangutan)).